The following is a 438-amino-acid chain: Ubiquitin carboxyl-terminal hydrolase 27 (438 aa).

Positions 78–421 (RGLINLGNTC…EGYLLFYHKQ (344 aa)) constitute a USP domain. The active-site Nucleophile is C87. The Proton acceptor role is filled by H380.

It belongs to the peptidase C19 family. As to quaternary structure, interacts with phosphorylated BCL2L11 isoform BIMEL; this interaction leads to BCL2L11 deubiquitination and stabilization.

The protein resides in the cytoplasm. The protein localises to the cytosol. Its subcellular location is the nucleus. The catalysed reaction is Thiol-dependent hydrolysis of ester, thioester, amide, peptide and isopeptide bonds formed by the C-terminal Gly of ubiquitin (a 76-residue protein attached to proteins as an intracellular targeting signal).. In terms of biological role, deubiquitinase involved in innate antiviral immunity by mediating deubiquitination of CGAS and RIGI. Negatively regulates RIGI by mediating 'Lys-63'-linked deubiquitination of RIGI, inhibiting type I interferon signaling. Also regulates 'Lys-63'-linked ubiquitination level of MDA5/IFIH1. Acts as a positive regulator of the cGAS-STING pathway by catalyzing 'Lys-48'-linked deubiquitination of CGAS, thereby promoting its stabilization. Can reduce the levels of BCL2L11/BIM ubiquitination and stabilize BCL2L11 in response to the RAF-MAPK-degradation signal. By acting on BCL2L11 levels, may counteract the anti-apoptotic effects of MAPK activity. This Homo sapiens (Human) protein is Ubiquitin carboxyl-terminal hydrolase 27.